Here is a 116-residue protein sequence, read N- to C-terminus: Ribosome-binding factor A (116 aa).

It belongs to the RbfA family. In terms of assembly, monomer. Binds 30S ribosomal subunits, but not 50S ribosomal subunits or 70S ribosomes.

It localises to the cytoplasm. One of several proteins that assist in the late maturation steps of the functional core of the 30S ribosomal subunit. Associates with free 30S ribosomal subunits (but not with 30S subunits that are part of 70S ribosomes or polysomes). Required for efficient processing of 16S rRNA. May interact with the 5'-terminal helix region of 16S rRNA. This is Ribosome-binding factor A from Streptococcus pyogenes serotype M28 (strain MGAS6180).